The chain runs to 257 residues: Imidazole glycerol phosphate synthase subunit HisF (257 aa).

Residues D11 and D130 contribute to the active site.

The protein belongs to the HisA/HisF family. In terms of assembly, heterodimer of HisH and HisF.

It is found in the cytoplasm. It carries out the reaction 5-[(5-phospho-1-deoxy-D-ribulos-1-ylimino)methylamino]-1-(5-phospho-beta-D-ribosyl)imidazole-4-carboxamide + L-glutamine = D-erythro-1-(imidazol-4-yl)glycerol 3-phosphate + 5-amino-1-(5-phospho-beta-D-ribosyl)imidazole-4-carboxamide + L-glutamate + H(+). The protein operates within amino-acid biosynthesis; L-histidine biosynthesis; L-histidine from 5-phospho-alpha-D-ribose 1-diphosphate: step 5/9. Functionally, IGPS catalyzes the conversion of PRFAR and glutamine to IGP, AICAR and glutamate. The HisF subunit catalyzes the cyclization activity that produces IGP and AICAR from PRFAR using the ammonia provided by the HisH subunit. This is Imidazole glycerol phosphate synthase subunit HisF from Xylella fastidiosa (strain M23).